Reading from the N-terminus, the 468-residue chain is MAEAATEIPPTASNVTVFTFEEQATSSLALYGMSILCIIIGSIRSAQYIRTNIDKKRLIEGSITMREARKFPISASLVLFGLYLFFKPAAERFLWVARVFQILRVPEEYVQKINSTIISYTANTTTTGPSEPFLLRLASRIPQERVPEAIQNAATYAYTNLPTIQKAECMQLLTFLICFEGVNAFASLLKPFVTAFLKKMPLVPSFLRFNAPYLFSLKKGNKEMEEGDIEDAKKKETEYLFKIDFDRYDIIALLMCSPILISHLLKRHWITNNIIGVSFSILGIERLHLASFKAGSLLLVGLFFYDIFWVFGTDVMTSVAKGIDAPILLQFPQDIYRNGIMEASKHSMLGLGDIVIPGIFIALLRRFDYRVVQTTAESKAPQGSLKGRYYFVVTVVAYMAGLFITMAVMHHFKAAQPALLYLVPCCLFVPLLLAVIRGELSALWNYDESRHVDNEENRKKVDSGKKNN.

Topologically, residues 1–22 are lumenal; the sequence is MAEAATEIPPTASNVTVFTFEE. N-linked (GlcNAc...) asparagine glycosylation occurs at N14. The chain crosses the membrane as a helical span at residues 23–43; it reads QATSSLALYGMSILCIIIGSI. The Cytoplasmic segment spans residues 44–70; sequence RSAQYIRTNIDKKRLIEGSITMREARK. The helical transmembrane segment at 71 to 91 threads the bilayer; the sequence is FPISASLVLFGLYLFFKPAAE. The Lumenal portion of the chain corresponds to 92–168; it reads RFLWVARVFQ…TNLPTIQKAE (77 aa). N-linked (GlcNAc...) asparagine glycans are attached at residues N114 and N123. Residues 169–189 traverse the membrane as a helical segment; it reads CMQLLTFLICFEGVNAFASLL. Topologically, residues 190–247 are cytoplasmic; that stretch reads KPFVTAFLKKMPLVPSFLRFNAPYLFSLKKGNKEMEEGDIEDAKKKETEYLFKIDFDR. Residues 248–265 traverse the membrane as a helical segment; sequence YDIIALLMCSPILISHLL. The Lumenal portion of the chain corresponds to 266–267; it reads KR. A helical membrane pass occupies residues 268 to 284; sequence HWITNNIIGVSFSILGI. Residues 285–296 lie on the Cytoplasmic side of the membrane; that stretch reads ERLHLASFKAGS. A helical transmembrane segment spans residues 297-317; that stretch reads LLLVGLFFYDIFWVFGTDVMT. The active site involves D306. The Lumenal segment spans residues 318–343; sequence SVAKGIDAPILLQFPQDIYRNGIMEA. A helical transmembrane segment spans residues 344–364; the sequence is SKHSMLGLGDIVIPGIFIALL. D353 is an active-site residue. The Cytoplasmic portion of the chain corresponds to 365–388; sequence RRFDYRVVQTTAESKAPQGSLKGR. Residues 389 to 409 traverse the membrane as a helical segment; sequence YYFVVTVVAYMAGLFITMAVM. Over 410 to 415 the chain is Lumenal; the sequence is HHFKAA. The helical transmembrane segment at 416–436 threads the bilayer; that stretch reads QPALLYLVPCCLFVPLLLAVI. Positions 417–419 match the PAL motif; sequence PAL. Residues 437–468 are Cytoplasmic-facing; the sequence is RGELSALWNYDESRHVDNEENRKKVDSGKKNN.

It belongs to the peptidase A22B family.

The protein resides in the membrane. Its subcellular location is the endoplasmic reticulum membrane. Functionally, acts as intramembrane protease. In larvae, required for the complete shedding of the cuticle during molting, possibly by regulating cholesterol uptake via lrp-1. Involved in embryonic and larval development. The chain is Intramembrane protease 2 from Caenorhabditis elegans.